Consider the following 277-residue polypeptide: Photosystem I assembly factor PSA3, chloroplastic (277 aa).

The transit peptide at 1 to 45 directs the protein to the chloroplast; the sequence is MVVVTHISTSFHQISPSFFHLRLRNPSTTSSSRPKLDGGFALSIR.

Interacts with PYG7.

The protein localises to the plastid. It localises to the chloroplast. The protein resides in the chloroplast thylakoid membrane. Nuclear genome-encoded factor required for the accumulation of photosystem I (PSI). Functions as a PSI biogenesis factor. Cooperates with PYG7 to promote the stable assembly of PSI in the thylakoid membrane. May target primarily the PsaC subunit. Does not seem to be required for the expression of chloroplast genes encoding PSI subunits. In Arabidopsis thaliana (Mouse-ear cress), this protein is Photosystem I assembly factor PSA3, chloroplastic.